We begin with the raw amino-acid sequence, 344 residues long: Methionine import ATP-binding protein MetN (344 aa).

Positions 2 to 241 (IEINQVNKVF…PKTELAHDFI (240 aa)) constitute an ABC transporter domain. 38–45 (GSSGAGKS) lines the ATP pocket.

The protein belongs to the ABC transporter superfamily. Methionine importer (TC 3.A.1.24) family. In terms of assembly, the complex is composed of two ATP-binding proteins (MetN), two transmembrane proteins (MetI) and a solute-binding protein (MetQ).

The protein resides in the cell inner membrane. It catalyses the reaction L-methionine(out) + ATP + H2O = L-methionine(in) + ADP + phosphate + H(+). The catalysed reaction is D-methionine(out) + ATP + H2O = D-methionine(in) + ADP + phosphate + H(+). Functionally, part of the ABC transporter complex MetNIQ involved in methionine import. Responsible for energy coupling to the transport system. The sequence is that of Methionine import ATP-binding protein MetN from Vibrio vulnificus (strain YJ016).